The primary structure comprises 236 residues: Exosome complex component Rrp4 (236 aa).

Positions 64–133 (GDKVIGKIIE…EIKESWLTLK (70 aa)) constitute an S1 motif domain. The KH domain maps to 141–199 (EGGHMVLIHASRVPRVIGKGGGMVNMVKELTSTRIIIGQNGLIWIDGPIEGVTMAIAAI).

It belongs to the RRP4 family. In terms of assembly, component of the archaeal exosome complex. Forms a trimer of Rrp4 and/or Csl4 subunits. The trimer associates with a hexameric ring-like arrangement composed of 3 Rrp41-Rrp42 heterodimers.

It localises to the cytoplasm. Functionally, non-catalytic component of the exosome, which is a complex involved in RNA degradation. Increases the RNA binding and the efficiency of RNA degradation. Confers strong poly(A) specificity to the exosome. This Thermoplasma volcanium (strain ATCC 51530 / DSM 4299 / JCM 9571 / NBRC 15438 / GSS1) protein is Exosome complex component Rrp4.